A 601-amino-acid polypeptide reads, in one-letter code: Glutamine--fructose-6-phosphate aminotransferase [isomerizing] (601 aa).

Cys2 acts as the Nucleophile; for GATase activity in catalysis. Residues 2–216 (CGIVGYIGTN…DKEIVIVTKD (215 aa)) form the Glutamine amidotransferase type-2 domain. SIS domains follow at residues 282–421 (ILDE…EIGD) and 453–591 (IAGE…VDKP). The active-site For Fru-6P isomerization activity is Lys596.

As to quaternary structure, homodimer.

Its subcellular location is the cytoplasm. It catalyses the reaction D-fructose 6-phosphate + L-glutamine = D-glucosamine 6-phosphate + L-glutamate. In terms of biological role, catalyzes the first step in hexosamine metabolism, converting fructose-6P into glucosamine-6P using glutamine as a nitrogen source. In Listeria innocua serovar 6a (strain ATCC BAA-680 / CLIP 11262), this protein is Glutamine--fructose-6-phosphate aminotransferase [isomerizing].